The sequence spans 294 residues: Aquaporin NIP2-2 (294 aa).

The next 2 membrane-spanning stretches (helical) occupy residues 54–74 (VISE…AASI) and 88–108 (SVAG…ISGA). The NPA 1 signature appears at 111-113 (NPA). 3 helical membrane-spanning segments follow: residues 129–151 (VPFY…KAVL), 169–189 (ALLI…AVAT), and 197–217 (LAGL…GPVS). Positions 222–224 (NPA) match the NPA 2 motif. A helical membrane pass occupies residues 235–255 (VFTGLWIYFLGPVIGTLSGAW).

It belongs to the MIP/aquaporin (TC 1.A.8) family. NIP (TC 1.A.8.12) subfamily.

It localises to the membrane. Functionally, aquaporins facilitate the transport of water and small neutral solutes across cell membranes. In Zea mays (Maize), this protein is Aquaporin NIP2-2 (NIP2-2).